Consider the following 272-residue polypeptide: HMP-PP phosphatase (272 aa).

Asp8 serves as the catalytic Nucleophile. Asp8, Asp10, and Asp212 together coordinate Mg(2+).

The protein belongs to the HAD-like hydrolase superfamily. Cof family. Mg(2+) is required as a cofactor.

It catalyses the reaction 4-amino-2-methyl-5-(diphosphooxymethyl)pyrimidine + H2O = 4-amino-2-methyl-5-(phosphooxymethyl)pyrimidine + phosphate + H(+). Catalyzes the hydrolysis of 4-amino-2-methyl-5-hydroxymethylpyrimidine pyrophosphate (HMP-PP) to 4-amino-2-methyl-5-hydroxymethylpyrimidine phosphate (HMP-P). This Salmonella newport (strain SL254) protein is HMP-PP phosphatase.